A 111-amino-acid polypeptide reads, in one-letter code: Large ribosomal subunit protein uL23 (111 aa).

It belongs to the universal ribosomal protein uL23 family. As to quaternary structure, part of the 50S ribosomal subunit. Contacts protein L29, and trigger factor when it is bound to the ribosome.

Its function is as follows. One of the early assembly proteins it binds 23S rRNA. One of the proteins that surrounds the polypeptide exit tunnel on the outside of the ribosome. Forms the main docking site for trigger factor binding to the ribosome. This Chlamydia abortus (strain DSM 27085 / S26/3) (Chlamydophila abortus) protein is Large ribosomal subunit protein uL23.